The following is a 647-amino-acid chain: Threonine--tRNA ligase (647 aa).

Positions 1-61 constitute a TGS domain; the sequence is MINITFPDGA…TEDGSIEIVT (61 aa). The catalytic stretch occupies residues 242 to 540; sequence DHRKLGKELD…LIENYKGAFP (299 aa). The Zn(2+) site is built by Cys-336, His-387, and His-517.

It belongs to the class-II aminoacyl-tRNA synthetase family. Homodimer. It depends on Zn(2+) as a cofactor.

Its subcellular location is the cytoplasm. It carries out the reaction tRNA(Thr) + L-threonine + ATP = L-threonyl-tRNA(Thr) + AMP + diphosphate + H(+). In terms of biological role, catalyzes the attachment of threonine to tRNA(Thr) in a two-step reaction: L-threonine is first activated by ATP to form Thr-AMP and then transferred to the acceptor end of tRNA(Thr). Also edits incorrectly charged L-seryl-tRNA(Thr). In Streptococcus pneumoniae (strain 70585), this protein is Threonine--tRNA ligase.